We begin with the raw amino-acid sequence, 480 residues long: Ribulose bisphosphate carboxylase large chain (480 aa).

Positions 1-2 are excised as a propeptide; the sequence is MS. At Pro-3 the chain carries N-acetylproline. Lys-14 carries the N6,N6,N6-trimethyllysine modification. Residues Asn-123 and Thr-173 each coordinate substrate. Lys-175 (proton acceptor) is an active-site residue. Lys-177 provides a ligand contact to substrate. The Mg(2+) site is built by Lys-201, Asp-203, and Glu-204. Residue Lys-201 is modified to N6-carboxylysine. The Proton acceptor role is filled by His-294. 3 residues coordinate substrate: Arg-295, His-327, and Ser-379.

Belongs to the RuBisCO large chain family. Type I subfamily. In terms of assembly, heterohexadecamer of 8 large chains and 8 small chains; disulfide-linked. The disulfide link is formed within the large subunit homodimers. The cofactor is Mg(2+). The disulfide bond which can form in the large chain dimeric partners within the hexadecamer appears to be associated with oxidative stress and protein turnover.

Its subcellular location is the plastid. The protein localises to the chloroplast. The catalysed reaction is 2 (2R)-3-phosphoglycerate + 2 H(+) = D-ribulose 1,5-bisphosphate + CO2 + H2O. It catalyses the reaction D-ribulose 1,5-bisphosphate + O2 = 2-phosphoglycolate + (2R)-3-phosphoglycerate + 2 H(+). RuBisCO catalyzes two reactions: the carboxylation of D-ribulose 1,5-bisphosphate, the primary event in carbon dioxide fixation, as well as the oxidative fragmentation of the pentose substrate in the photorespiration process. Both reactions occur simultaneously and in competition at the same active site. The sequence is that of Ribulose bisphosphate carboxylase large chain from Gossypium barbadense (Sea Island cotton).